The sequence spans 953 residues: Atromentin synthetase invA5 (953 aa).

The tract at residues serine 37–valine 460 is adenylation (A) domain. One can recognise a Carrier domain in the interval alanine 592–isoleucine 670. The interval threonine 597–aspartate 667 is thiolation and peptide carrier (T) domain. Serine 629 is subject to O-(pantetheine 4'-phosphoryl)serine. The tract at residues proline 693–asparagine 795 is thioesterase (TE) domain.

The protein belongs to the ATP-dependent AMP-binding enzyme family.

It functions in the pathway secondary metabolite biosynthesis. Its function is as follows. An L-tyrosine:2-oxoglutarate aminotransferase (probably invD) and atromentin synthetase invA5 catalyze consecutive steps to turn over L-tyrosine into atromentin, which represents the generic precursor molecule for the entire terphenylquinone and pulvinic acid family of pigments, which are widely distributed secondary metabolites in homobasidiomycetes. The first step catalyzed by the aminotransferase converts L-tyrosine in to 4-hydroxyphenylpyruvate (4-HPP). Adenylation of two 4-HPP monomers by the invA5 adenylation (A) domain, covalent tethering of the monomers as a thioester and oxoester onto the invA5 thiolation (T) and thioesterase (TE) domains, respectively, and symmetric C-C-bond formation between two monomers catalyzed by the invA5 TE domain leads to atromentin. In Paxillus involutus (Naked brimcap), this protein is Atromentin synthetase invA5 (invA5).